Here is a 316-residue protein sequence, read N- to C-terminus: M-phase inducer phosphatase cdc-25.3 (316 aa).

The interval 35–65 (QNRQHSSAISHISNSSPPTRKRSIDGGYTSG) is disordered. A compositionally biased stretch (low complexity) spans 39–50 (HSSAISHISNSS). The Rhodanese domain maps to 136 to 242 (FMQKYILIDC…FYAFTRGLEK (107 aa)).

It belongs to the MPI phosphatase family.

The catalysed reaction is O-phospho-L-tyrosyl-[protein] + H2O = L-tyrosyl-[protein] + phosphate. This is M-phase inducer phosphatase cdc-25.3 (cdc-25.3) from Caenorhabditis elegans.